A 420-amino-acid chain; its full sequence is Tyrosine--tRNA ligase (420 aa).

Y33 lines the L-tyrosine pocket. The 'HIGH' region signature appears at 38–47; the sequence is PTGDSLHAGH. Residues Y167 and Q171 each contribute to the L-tyrosine site. The short motif at 227 to 231 is the 'KMSKS' region element; that stretch reads KFGKS. K230 lines the ATP pocket. Positions 352 to 418 constitute an S4 RNA-binding domain; that stretch reads PTIIDLLIGA…GKKNFAGVKY (67 aa).

It belongs to the class-I aminoacyl-tRNA synthetase family. TyrS type 1 subfamily. Homodimer.

It is found in the cytoplasm. It catalyses the reaction tRNA(Tyr) + L-tyrosine + ATP = L-tyrosyl-tRNA(Tyr) + AMP + diphosphate + H(+). Catalyzes the attachment of tyrosine to tRNA(Tyr) in a two-step reaction: tyrosine is first activated by ATP to form Tyr-AMP and then transferred to the acceptor end of tRNA(Tyr). This Corynebacterium diphtheriae (strain ATCC 700971 / NCTC 13129 / Biotype gravis) protein is Tyrosine--tRNA ligase.